The primary structure comprises 340 residues: Solute carrier family 35 member G3 (340 aa).

The disordered stretch occupies residues 11–33 (PDFTQPSPPSTPASLPSKHHHRC). A run of 9 helical transmembrane segments spans residues 39–59 (TKGL…VGPF), 69–89 (LPSL…ALLL), 107–127 (FLHA…VQVV), 160–180 (AWCG…PGLG), 189–209 (LYTA…SLGL), 223–243 (TVAF…LFVL), 257–277 (CVVA…YAVT), 283–303 (LVCA…YYVL), and 307–327 (VAPS…IITA). The region spanning 51–176 (LSAGFVGPFS…STLGLIIIVG (126 aa)) is the EamA 1 domain. The 54-residue stretch at 274-327 (YAVTKAHPALVCAVLHSEVVVALMLQYYVLYETVAPSDIMGAGVVLGSIAIITA) folds into the EamA 2 domain.

The protein belongs to the SLC35G solute transporter family.

It is found in the membrane. The chain is Solute carrier family 35 member G3 (Slc35g3) from Mus musculus (Mouse).